The chain runs to 314 residues: uncharacterized protein (314 aa).

Disordered regions lie at residues 170 to 203 and 258 to 314; these read RSSM…NPDE and VGES…PKKR. A compositionally biased stretch (low complexity) spans 171-186; sequence SSMNSQSQMSESSFPT. Residues 187-200 show a composition bias toward pro residues; it reads PIDPPPRIPHPPLN. Over residues 261-272 the composition is skewed to polar residues; sequence SSRQGENTQNVH. Residues 289–303 show a composition bias toward basic and acidic residues; sequence RFKDDARKSNEDEHM.

This is an uncharacterized protein from Arabidopsis thaliana (Mouse-ear cress).